Reading from the N-terminus, the 210-residue chain is Synaptosomal-associated protein 23 (210 aa).

Met-1 bears the N-acetylmethionine mark. Phosphoserine occurs at positions 5, 20, 23, and 34. The 63-residue stretch at His-14–Leu-76 folds into the t-SNARE coiled-coil homology 1 domain. Residues Ser-23–Leu-76 adopt a coiled-coil conformation. 5 S-palmitoyl cysteine lipidation sites follow: Cys-79, Cys-80, Cys-83, Cys-85, and Cys-87. The tract at residues Gly-104–Ser-135 is disordered. Residues Asn-109 to Ala-133 are compositionally biased toward polar residues. Phosphoserine is present on residues Ser-110 and Ser-160. In terms of domain architecture, t-SNARE coiled-coil homology 2 spans Asp-145–Leu-207.

The protein belongs to the SNAP-25 family. As to quaternary structure, homotetramer (via coiled-coil domain), also forms heterotetramers with STX4 and VAMP3. Found in a complex with VAMP8 and STX1A. Found in a complex with VAMP8 and STX4 in pancreas. Interacts simultaneously with SNAPIN and SYN4. Interacts with STX1A. Interacts with STX12. Interacts tightly to multiple syntaxins and synaptobrevins/VAMPs. Interacts with ZDHHC13 (via ANK repeats). Interacts with ZDHHC17 (via ANK repeats). Post-translationally, (Microbial infection) Targeted and hydrolyzed by C.botulinum neurotoxin type A (BoNT/A, botA) which hydrolyzes the 202-Thr-|-Arg-203 bond; the in vitro reaction is not highly efficient. In terms of processing, (Microbial infection) Targeted and hydrolyzed by C.botulinum neurotoxin type E (BoNT/E) which hydrolyzes the 185-Arg-|-Ile-186 bond; the in vitro reaction is more efficient than that of BoNT/A. In terms of tissue distribution, expressed in non-neuronal tissues.

It is found in the cell membrane. It localises to the synapse. The protein resides in the synaptosome. Essential component of the high affinity receptor for the general membrane fusion machinery and an important regulator of transport vesicle docking and fusion. The sequence is that of Synaptosomal-associated protein 23 (Snap23) from Mus musculus (Mouse).